The chain runs to 270 residues: Shikimate dehydrogenase (NADP(+)) (270 aa).

Residues 14 to 16 (SKS) and T60 contribute to the shikimate site. The Proton acceptor role is filled by K64. An NADP(+)-binding site is contributed by E76. Shikimate-binding residues include N85 and D101. NADP(+) is bound by residues 125–129 (GAGGA), 149–154 (NRTASR), and M213. Shikimate is bound at residue Y215. Residue G236 participates in NADP(+) binding.

Belongs to the shikimate dehydrogenase family. Homodimer.

It carries out the reaction shikimate + NADP(+) = 3-dehydroshikimate + NADPH + H(+). It functions in the pathway metabolic intermediate biosynthesis; chorismate biosynthesis; chorismate from D-erythrose 4-phosphate and phosphoenolpyruvate: step 4/7. In terms of biological role, involved in the biosynthesis of the chorismate, which leads to the biosynthesis of aromatic amino acids. Catalyzes the reversible NADPH linked reduction of 3-dehydroshikimate (DHSA) to yield shikimate (SA). The protein is Shikimate dehydrogenase (NADP(+)) of Stutzerimonas stutzeri (strain A1501) (Pseudomonas stutzeri).